Here is a 915-residue protein sequence, read N- to C-terminus: Phototropin-2 (915 aa).

Over residues 1–10 (MERPRAPPSP) the composition is skewed to pro residues. 2 disordered regions span residues 1 to 62 (MERP…EFQD) and 84 to 118 (DDGI…GAFP). Serine 9 and serine 22 each carry phosphoserine. Residues 27 to 43 (NPSSGKETHGSTSSSSK) are compositionally biased toward polar residues. Basic and acidic residues predominate over residues 93–107 (SEVERSKNMSRRSSE). In terms of domain architecture, PAS 1 spans 120–193 (VSQELKTALS…AKIRDCVKNG (74 aa)). Serine 121 is subject to Phosphoserine. An FMN-binding site is contributed by asparagine 169. The residue at position 170 (cysteine 170) is an S-4a-FMN cysteine. Residues arginine 171, glutamine 174, arginine 187, asparagine 202, asparagine 212, glutamine 233, and lysine 238 each coordinate FMN. The 55-residue stretch at 194-248 (KSYCGRLLNYKKDGTPFWNLLTVTPIKDDQGNTIKFIGMQVEVSKYTEGVNDKAL) folds into the PAC 1 domain. A disordered region spans residues 281-344 (HRKSQVQESV…KSSNNRHEDL (64 aa)). Composition is skewed to polar residues over residues 286–310 (VQES…GRQT) and 325–337 (RVST…LKSS). Serine 364 bears the Phosphoserine mark. The PAS 2 domain occupies 376–449 (QGIDLATTLE…QKIRDAIRDQ (74 aa)). Residue asparagine 425 coordinates FMN. An S-4a-FMN cysteine modification is found at cysteine 426. FMN contacts are provided by arginine 427, glutamine 430, arginine 443, asparagine 458, asparagine 468, phenylalanine 470, and glutamine 489. The region spanning 450–504 (REITVQLINYTKSGKKFWNLFHLQPMRDQKGELQYFIGVQLDGSDHVEPLQNRLS) is the PAC 2 domain. One can recognise a Protein kinase domain in the interval 577–864 (FKPIKPLGSG…ANEIKQHAFF (288 aa)). Residues 583 to 591 (LGSGDTGSV) and lysine 606 contribute to the ATP site. Aspartate 702 (proton acceptor) is an active-site residue. An activation loop region spans residues 720-774 (DFDLSFMTTCTPQLIIPAAPSKRRRSKSQPLPTFVAEPSTQSNSFVGTEEYIAPE).

The protein belongs to the protein kinase superfamily. AGC Ser/Thr protein kinase family. In terms of assembly, homodimer. Interacts with PKS1, PKS2, RPT3 and PHOT1. Associates with CBC1 and CBC2. Binds to BHP. FMN is required as a cofactor. Autophosphorylated in response to blue light irradiation. In terms of processing, 2 molecules of FMN bind covalently to cysteines after exposure to blue light and are reversed in the dark. As to expression, expressed in leaves, stems and flowers, and to a lower extent in roots. Present in guard cells (at protein level).

The protein localises to the cell membrane. It carries out the reaction L-seryl-[protein] + ATP = O-phospho-L-seryl-[protein] + ADP + H(+). It catalyses the reaction L-threonyl-[protein] + ATP = O-phospho-L-threonyl-[protein] + ADP + H(+). With respect to regulation, autophosphorylation is inhibited by staurosporine, but not by tyrphostin 9, sphingosine, GW5074 and BML-265. Protein kinase that acts as a blue light photoreceptor in a signal-transduction pathway for photo-induced movements. Triggers the phosphorylation of AHA1 and AHA2 C-terminal penultimate Thr in guard cells to activate them and induce stomatal opening in response to blue light (BL). Also phosphorylates BLUS1, a kinase involved in stomatal opening. Mediates calcium spiking of extra- and intracellular origins in response to blue light. Involved in hypocotyl phototropism. Contributes to the chloroplast accumulation in low blue light and mediates their translocation (avoidance response) at high fluence. Regulates stomata opening and photomorphogenesis response of leaf tissue. Not involved in hypocotyl elongation inhibition, anthocyanin accumulation or cotyledon opening. The chain is Phototropin-2 from Arabidopsis thaliana (Mouse-ear cress).